The primary structure comprises 591 residues: L-fucose isomerase (591 aa).

Residues glutamate 338 and aspartate 362 each act as proton acceptor in the active site. Residues glutamate 338, aspartate 362, and histidine 529 each contribute to the Mn(2+) site.

It belongs to the L-fucose isomerase family. Requires Mn(2+) as cofactor.

Its subcellular location is the cytoplasm. It carries out the reaction L-fucose = L-fuculose. Its pathway is carbohydrate degradation; L-fucose degradation; L-lactaldehyde and glycerone phosphate from L-fucose: step 1/3. In terms of biological role, converts the aldose L-fucose into the corresponding ketose L-fuculose. The polypeptide is L-fucose isomerase (Phocaeicola vulgatus (strain ATCC 8482 / DSM 1447 / JCM 5826 / CCUG 4940 / NBRC 14291 / NCTC 11154) (Bacteroides vulgatus)).